Here is a 572-residue protein sequence, read N- to C-terminus: Proline--tRNA ligase (572 aa).

It belongs to the class-II aminoacyl-tRNA synthetase family. ProS type 1 subfamily. In terms of assembly, homodimer.

The protein localises to the cytoplasm. It catalyses the reaction tRNA(Pro) + L-proline + ATP = L-prolyl-tRNA(Pro) + AMP + diphosphate. In terms of biological role, catalyzes the attachment of proline to tRNA(Pro) in a two-step reaction: proline is first activated by ATP to form Pro-AMP and then transferred to the acceptor end of tRNA(Pro). As ProRS can inadvertently accommodate and process non-cognate amino acids such as alanine and cysteine, to avoid such errors it has two additional distinct editing activities against alanine. One activity is designated as 'pretransfer' editing and involves the tRNA(Pro)-independent hydrolysis of activated Ala-AMP. The other activity is designated 'posttransfer' editing and involves deacylation of mischarged Ala-tRNA(Pro). The misacylated Cys-tRNA(Pro) is not edited by ProRS. The protein is Proline--tRNA ligase of Salmonella newport (strain SL254).